A 390-amino-acid chain; its full sequence is GTP 3',8-cyclase, mitochondrial (390 aa).

The N-terminal 45 residues, Met1–Phe45, are a transit peptide targeting the mitochondrion. A Radical SAM core domain is found at Lys69 to Pro290. Arg78 provides a ligand contact to GTP. Positions 85 and 89 each coordinate [4Fe-4S] cluster. Tyr91 contributes to the S-adenosyl-L-methionine binding site. Cys92 contacts [4Fe-4S] cluster. Arg128 contributes to the GTP binding site. Gly132 is an S-adenosyl-L-methionine binding site. Thr159 contacts GTP. An S-adenosyl-L-methionine-binding site is contributed by Ser183. Residue Lys220 participates in GTP binding. Met254 lines the S-adenosyl-L-methionine pocket. Cys317 and Cys320 together coordinate [4Fe-4S] cluster. Residue Arg322–Arg324 participates in GTP binding. [4Fe-4S] cluster is bound at residue Cys334.

The protein belongs to the radical SAM superfamily. MoaA family. As to quaternary structure, homodimer. The cofactor is [4Fe-4S] cluster. Expressed in all organs, with an abundant expression in the roots.

It is found in the mitochondrion matrix. It carries out the reaction GTP + AH2 + S-adenosyl-L-methionine = (8S)-3',8-cyclo-7,8-dihydroguanosine 5'-triphosphate + 5'-deoxyadenosine + L-methionine + A + H(+). The protein operates within cofactor biosynthesis; molybdopterin biosynthesis. Its function is as follows. Catalyzes the cyclization of GTP to (8S)-3',8-cyclo-7,8-dihydroguanosine 5'-triphosphate. This chain is GTP 3',8-cyclase, mitochondrial (CNX2), found in Arabidopsis thaliana (Mouse-ear cress).